The sequence spans 227 residues: Uridylate kinase (227 aa).

An ATP-binding site is contributed by 6 to 10 (KVSGK). Glycine 43 contacts UMP. Glycine 44 and arginine 48 together coordinate ATP. UMP contacts are provided by residues aspartate 65 and 113–119 (FQPGQST). ATP is bound by residues threonine 139, asparagine 140, tyrosine 145, and aspartate 148.

It belongs to the UMP kinase family. In terms of assembly, homohexamer.

The protein localises to the cytoplasm. The catalysed reaction is UMP + ATP = UDP + ADP. Its pathway is pyrimidine metabolism; CTP biosynthesis via de novo pathway; UDP from UMP (UMPK route): step 1/1. Its activity is regulated as follows. Inhibited by UTP. Its function is as follows. Catalyzes the reversible phosphorylation of UMP to UDP. This chain is Uridylate kinase, found in Sulfolobus acidocaldarius (strain ATCC 33909 / DSM 639 / JCM 8929 / NBRC 15157 / NCIMB 11770).